Reading from the N-terminus, the 290-residue chain is Agmatinase (290 aa).

Mn(2+) contacts are provided by H112, D135, H137, D139, D216, and D218.

The protein belongs to the arginase family. Agmatinase subfamily. Mn(2+) is required as a cofactor.

The enzyme catalyses agmatine + H2O = urea + putrescine. The protein operates within amine and polyamine biosynthesis; putrescine biosynthesis via agmatine pathway; putrescine from agmatine: step 1/1. Its function is as follows. Catalyzes the formation of putrescine from agmatine. This Bacillus anthracis protein is Agmatinase (speB).